A 378-amino-acid chain; its full sequence is Glutamate 5-kinase (378 aa).

Residue lysine 14 participates in ATP binding. Substrate-binding residues include serine 54, aspartate 141, and asparagine 153. Residue 173–174 (SD) participates in ATP binding. The PUA domain maps to 279 to 356 (AGRLTVDAGA…DEISEILGYD (78 aa)).

Belongs to the glutamate 5-kinase family.

Its subcellular location is the cytoplasm. The enzyme catalyses L-glutamate + ATP = L-glutamyl 5-phosphate + ADP. Its pathway is amino-acid biosynthesis; L-proline biosynthesis; L-glutamate 5-semialdehyde from L-glutamate: step 1/2. In terms of biological role, catalyzes the transfer of a phosphate group to glutamate to form L-glutamate 5-phosphate. This chain is Glutamate 5-kinase, found in Brucella anthropi (strain ATCC 49188 / DSM 6882 / CCUG 24695 / JCM 21032 / LMG 3331 / NBRC 15819 / NCTC 12168 / Alc 37) (Ochrobactrum anthropi).